The following is a 305-amino-acid chain: Ribosomal RNA small subunit methyltransferase H (305 aa).

Residues 33 to 35, Asp-51, Phe-78, Asp-96, and Gln-103 contribute to the S-adenosyl-L-methionine site; that span reads GGY.

This sequence belongs to the methyltransferase superfamily. RsmH family.

The protein resides in the cytoplasm. It catalyses the reaction cytidine(1402) in 16S rRNA + S-adenosyl-L-methionine = N(4)-methylcytidine(1402) in 16S rRNA + S-adenosyl-L-homocysteine + H(+). Specifically methylates the N4 position of cytidine in position 1402 (C1402) of 16S rRNA. This is Ribosomal RNA small subunit methyltransferase H from Rickettsia bellii (strain RML369-C).